The primary structure comprises 123 residues: Small ribosomal subunit protein uS12 (123 aa).

Aspartate 89 bears the 3-methylthioaspartic acid mark.

It belongs to the universal ribosomal protein uS12 family. In terms of assembly, part of the 30S ribosomal subunit. Contacts proteins S8 and S17. May interact with IF1 in the 30S initiation complex.

Functionally, with S4 and S5 plays an important role in translational accuracy. Its function is as follows. Interacts with and stabilizes bases of the 16S rRNA that are involved in tRNA selection in the A site and with the mRNA backbone. Located at the interface of the 30S and 50S subunits, it traverses the body of the 30S subunit contacting proteins on the other side and probably holding the rRNA structure together. The combined cluster of proteins S8, S12 and S17 appears to hold together the shoulder and platform of the 30S subunit. The protein is Small ribosomal subunit protein uS12 of Bartonella bacilliformis (strain ATCC 35685 / KC583 / Herrer 020/F12,63).